Here is a 428-residue protein sequence, read N- to C-terminus: Adenylosuccinate synthetase (428 aa).

Residues 12–18 (GDEGKGK) and 40–42 (GHT) each bind GTP. Asp13 serves as the catalytic Proton acceptor. Mg(2+) is bound by residues Asp13 and Gly40. IMP contacts are provided by residues 13 to 16 (DEGK), 38 to 41 (NAGH), Thr129, Arg143, Gln224, Thr239, and Arg303. Residue His41 is the Proton donor of the active site. 299-305 (VTTGRIR) serves as a coordination point for substrate. GTP-binding positions include Arg305, 331-333 (KVD), and 410-412 (AYG).

This sequence belongs to the adenylosuccinate synthetase family. As to quaternary structure, homodimer. Requires Mg(2+) as cofactor.

It localises to the cytoplasm. It catalyses the reaction IMP + L-aspartate + GTP = N(6)-(1,2-dicarboxyethyl)-AMP + GDP + phosphate + 2 H(+). Its pathway is purine metabolism; AMP biosynthesis via de novo pathway; AMP from IMP: step 1/2. Its function is as follows. Plays an important role in the de novo pathway of purine nucleotide biosynthesis. Catalyzes the first committed step in the biosynthesis of AMP from IMP. This Francisella tularensis subsp. novicida (strain U112) protein is Adenylosuccinate synthetase.